The primary structure comprises 149 residues: Endonuclease I (149 aa).

In terms of assembly, homodimer.

It catalyses the reaction Endonucleolytic cleavage to 5'-phosphooligonucleotide end-products.. Its function is as follows. Junction-resolving enzyme that selectively binds and cleaves four-way (Holliday) DNA junctions present after viral genomic replication. These intermediates are created during DNA repair, processing of stalled replication forks and homologous genetic recombination. Introduces two nicks on the two non-crossing strands, at 5' sides of the junction. Also participates together with gp6 in the degradation of host chromosome to provide nucleotides for phage DNA synthesis. The protein is Endonuclease I of Escherichia coli (Bacteriophage T7).